The sequence spans 202 residues: Dephospho-CoA kinase (202 aa).

One can recognise a DPCK domain in the interval 4–201 (VVALTGGIAS…QKYLAMSRQN (198 aa)). An ATP-binding site is contributed by 12–17 (ASGKTT).

It belongs to the CoaE family.

Its subcellular location is the cytoplasm. It catalyses the reaction 3'-dephospho-CoA + ATP = ADP + CoA + H(+). It functions in the pathway cofactor biosynthesis; coenzyme A biosynthesis; CoA from (R)-pantothenate: step 5/5. Catalyzes the phosphorylation of the 3'-hydroxyl group of dephosphocoenzyme A to form coenzyme A. This chain is Dephospho-CoA kinase, found in Vibrio cholerae serotype O1 (strain ATCC 39315 / El Tor Inaba N16961).